The following is a 438-amino-acid chain: Glutamate-1-semialdehyde 2,1-aminomutase (438 aa).

The residue at position 277 (lysine 277) is an N6-(pyridoxal phosphate)lysine.

This sequence belongs to the class-III pyridoxal-phosphate-dependent aminotransferase family. HemL subfamily. In terms of assembly, homodimer. Requires pyridoxal 5'-phosphate as cofactor.

The protein resides in the cytoplasm. The enzyme catalyses (S)-4-amino-5-oxopentanoate = 5-aminolevulinate. It functions in the pathway porphyrin-containing compound metabolism; protoporphyrin-IX biosynthesis; 5-aminolevulinate from L-glutamyl-tRNA(Glu): step 2/2. Its pathway is porphyrin-containing compound metabolism; chlorophyll biosynthesis. The protein is Glutamate-1-semialdehyde 2,1-aminomutase of Synechococcus sp. (strain CC9311).